The primary structure comprises 128 residues: Large ribosomal subunit protein bL17 (128 aa).

This sequence belongs to the bacterial ribosomal protein bL17 family. Part of the 50S ribosomal subunit. Contacts protein L32.

The protein is Large ribosomal subunit protein bL17 of Pseudomonas syringae pv. syringae (strain B728a).